Here is a 391-residue protein sequence, read N- to C-terminus: DNA repair protein NreA (391 aa).

Residues cysteine 6–cysteine 20 form a C4-type zinc finger. Positions glutamine 382–phenylalanine 389 match the PIP motif motif.

This sequence belongs to the Nre family. In terms of assembly, interacts with the DNA polymerase sliding clamp (PCNA) via the PIP (PCNA-interacting peptide) motif.

Involved in DNA damage repair. This is DNA repair protein NreA from Archaeoglobus fulgidus (strain ATCC 49558 / DSM 4304 / JCM 9628 / NBRC 100126 / VC-16).